We begin with the raw amino-acid sequence, 155 residues long: Crossover junction endodeoxyribonuclease RuvC (155 aa).

Catalysis depends on residues Asp7, Glu68, and Asp140. Residues Asp7, Glu68, and Asp140 each coordinate Mg(2+).

The protein belongs to the RuvC family. As to quaternary structure, homodimer which binds Holliday junction (HJ) DNA. The HJ becomes 2-fold symmetrical on binding to RuvC with unstacked arms; it has a different conformation from HJ DNA in complex with RuvA. In the full resolvosome a probable DNA-RuvA(4)-RuvB(12)-RuvC(2) complex forms which resolves the HJ. It depends on Mg(2+) as a cofactor.

It is found in the cytoplasm. It carries out the reaction Endonucleolytic cleavage at a junction such as a reciprocal single-stranded crossover between two homologous DNA duplexes (Holliday junction).. The RuvA-RuvB-RuvC complex processes Holliday junction (HJ) DNA during genetic recombination and DNA repair. Endonuclease that resolves HJ intermediates. Cleaves cruciform DNA by making single-stranded nicks across the HJ at symmetrical positions within the homologous arms, yielding a 5'-phosphate and a 3'-hydroxyl group; requires a central core of homology in the junction. The consensus cleavage sequence is 5'-(A/T)TT(C/G)-3'. Cleavage occurs on the 3'-side of the TT dinucleotide at the point of strand exchange. HJ branch migration catalyzed by RuvA-RuvB allows RuvC to scan DNA until it finds its consensus sequence, where it cleaves and resolves the cruciform DNA. In Prochlorococcus marinus (strain SARG / CCMP1375 / SS120), this protein is Crossover junction endodeoxyribonuclease RuvC.